We begin with the raw amino-acid sequence, 172 residues long: 3-hydroxydecanoyl-[acyl-carrier-protein] dehydratase (172 aa).

H70 is a catalytic residue.

It belongs to the thioester dehydratase family. FabA subfamily. As to quaternary structure, homodimer.

It is found in the cytoplasm. It catalyses the reaction a (3R)-hydroxyacyl-[ACP] = a (2E)-enoyl-[ACP] + H2O. It carries out the reaction (3R)-hydroxydecanoyl-[ACP] = (2E)-decenoyl-[ACP] + H2O. The catalysed reaction is (2E)-decenoyl-[ACP] = (3Z)-decenoyl-[ACP]. It functions in the pathway lipid metabolism; fatty acid biosynthesis. In terms of biological role, necessary for the introduction of cis unsaturation into fatty acids. Catalyzes the dehydration of (3R)-3-hydroxydecanoyl-ACP to E-(2)-decenoyl-ACP and then its isomerization to Z-(3)-decenoyl-ACP. Can catalyze the dehydratase reaction for beta-hydroxyacyl-ACPs with saturated chain lengths up to 16:0, being most active on intermediate chain length. This Xylella fastidiosa (strain M12) protein is 3-hydroxydecanoyl-[acyl-carrier-protein] dehydratase.